Here is a 218-residue protein sequence, read N- to C-terminus: UPF0502 protein VS_II0353 (218 aa).

The protein belongs to the UPF0502 family.

In Vibrio atlanticus (strain LGP32) (Vibrio splendidus (strain Mel32)), this protein is UPF0502 protein VS_II0353.